Reading from the N-terminus, the 345-residue chain is MQITDQEALLRCIEHREIFHDEMLTLFRRIMSGEMSPVMMAAIITGLRVKKESIGEITAAAEVMREFATKVPLTDTTNLLDIVGTGGDGANTFNISTASMFVAAAAGARIAKHGGRSVSSSSGSADALDALGANINLKPELVAESIAQTGIGFMFAPNHHAAMKHAAAVRKELGVRTIFNILGPLTNPAGAPNILMGVFHPDLVGIQVRVLQRLGAQHAIVVWGRDNMDEVSLGAATMVGELIDGKIREYEIHPEDFGLPMIASRNLRVANAAESKTRILEVLANTAGPARDIVTLNAGTALYAAGVASSISAGLQLAREAIASGAARAKMEQFVRVTQELGSKA.

5-phospho-alpha-D-ribose 1-diphosphate-binding positions include Gly-84, Gly-87–Asp-88, Thr-92, Asn-94–Thr-97, Lys-112–Ser-120, and Ser-124. Gly-84 provides a ligand contact to anthranilate. Ser-96 lines the Mg(2+) pocket. Arg-170 is a binding site for anthranilate. Mg(2+) contacts are provided by Asp-229 and Glu-230.

Belongs to the anthranilate phosphoribosyltransferase family. Homodimer. Mg(2+) is required as a cofactor.

The enzyme catalyses N-(5-phospho-beta-D-ribosyl)anthranilate + diphosphate = 5-phospho-alpha-D-ribose 1-diphosphate + anthranilate. The protein operates within amino-acid biosynthesis; L-tryptophan biosynthesis; L-tryptophan from chorismate: step 2/5. Functionally, catalyzes the transfer of the phosphoribosyl group of 5-phosphorylribose-1-pyrophosphate (PRPP) to anthranilate to yield N-(5'-phosphoribosyl)-anthranilate (PRA). In Herminiimonas arsenicoxydans, this protein is Anthranilate phosphoribosyltransferase.